Consider the following 219-residue polypeptide: Orotate phosphoribosyltransferase (219 aa).

Lys-26 contacts 5-phospho-alpha-D-ribose 1-diphosphate. Residue 34–35 (FF) coordinates orotate. 5-phospho-alpha-D-ribose 1-diphosphate-binding positions include 72–73 (YK), Arg-98, Lys-99, Lys-102, His-104, and 124–132 (DDVITAGTA). Thr-128 and Arg-156 together coordinate orotate.

It belongs to the purine/pyrimidine phosphoribosyltransferase family. PyrE subfamily. In terms of assembly, homodimer. It depends on Mg(2+) as a cofactor.

It catalyses the reaction orotidine 5'-phosphate + diphosphate = orotate + 5-phospho-alpha-D-ribose 1-diphosphate. The protein operates within pyrimidine metabolism; UMP biosynthesis via de novo pathway; UMP from orotate: step 1/2. In terms of biological role, catalyzes the transfer of a ribosyl phosphate group from 5-phosphoribose 1-diphosphate to orotate, leading to the formation of orotidine monophosphate (OMP). The chain is Orotate phosphoribosyltransferase from Xanthomonas euvesicatoria pv. vesicatoria (strain 85-10) (Xanthomonas campestris pv. vesicatoria).